The sequence spans 147 residues: Ribonuclease 4 (147 aa).

Positions 1–28 (MALQRTQAFLLLLLLTLLGLGLVQPSYG) are cleaved as a signal peptide. A Pyrrolidone carboxylic acid modification is found at glutamine 29. The dUMP site is built by arginine 35, histidine 40, lysine 68, asparagine 71, and threonine 72. Histidine 40 functions as the Proton acceptor in the catalytic mechanism. Disulfide bonds link cysteine 53–cysteine 109, cysteine 67–cysteine 120, cysteine 85–cysteine 135, and cysteine 92–cysteine 99. Histidine 144 serves as the catalytic Proton donor. Phenylalanine 145 provides a ligand contact to dUMP.

The protein belongs to the pancreatic ribonuclease family.

The protein localises to the secreted. Its function is as follows. Cleaves preferentially after uridine bases. Has antimicrobial activity against uropathogenic E.coli (UPEC). Probably contributes to urinary tract sterility. The sequence is that of Ribonuclease 4 (RNASE4) from Bos taurus (Bovine).